The chain runs to 122 residues: MARLAGVDLPRNKRMEIALTYIYGIGPARAKQLLEETGVSPDLRTDNLTDEQIASLRDVIEATWKVEGDLRREVQADIRRKIEIGSYQGLRHRRGLPVRGQRTKTNARTRKGPKKTIAGKKK.

Residues 93–122 are disordered; sequence RRGLPVRGQRTKTNARTRKGPKKTIAGKKK.

Belongs to the universal ribosomal protein uS13 family. Part of the 30S ribosomal subunit. Forms a loose heterodimer with protein S19. Forms two bridges to the 50S subunit in the 70S ribosome.

Its function is as follows. Located at the top of the head of the 30S subunit, it contacts several helices of the 16S rRNA. In the 70S ribosome it contacts the 23S rRNA (bridge B1a) and protein L5 of the 50S subunit (bridge B1b), connecting the 2 subunits; these bridges are implicated in subunit movement. Contacts the tRNAs in the A and P-sites. This is Small ribosomal subunit protein uS13 from Corynebacterium efficiens (strain DSM 44549 / YS-314 / AJ 12310 / JCM 11189 / NBRC 100395).